Here is a 558-residue protein sequence, read N- to C-terminus: Arginine--tRNA ligase (558 aa).

A 'HIGH' region motif is present at residues 119-129 (PNIAKPMSMGH).

Belongs to the class-I aminoacyl-tRNA synthetase family. Monomer.

It is found in the cytoplasm. It carries out the reaction tRNA(Arg) + L-arginine + ATP = L-arginyl-tRNA(Arg) + AMP + diphosphate. The chain is Arginine--tRNA ligase from Lactobacillus johnsonii (strain CNCM I-12250 / La1 / NCC 533).